The following is a 314-amino-acid chain: Homoserine kinase (314 aa).

Position 95 to 105 (95 to 105) interacts with ATP; it reads PHSRGLGSSAA.

The protein belongs to the GHMP kinase family. Homoserine kinase subfamily.

The protein resides in the cytoplasm. The enzyme catalyses L-homoserine + ATP = O-phospho-L-homoserine + ADP + H(+). It functions in the pathway amino-acid biosynthesis; L-threonine biosynthesis; L-threonine from L-aspartate: step 4/5. Catalyzes the ATP-dependent phosphorylation of L-homoserine to L-homoserine phosphate. The sequence is that of Homoserine kinase from Mycolicibacterium vanbaalenii (strain DSM 7251 / JCM 13017 / BCRC 16820 / KCTC 9966 / NRRL B-24157 / PYR-1) (Mycobacterium vanbaalenii).